A 263-amino-acid chain; its full sequence is Shikimate dehydrogenase (NADP(+)) (263 aa).

Residues Ser-16–Ser-18 and Thr-65 contribute to the shikimate site. Catalysis depends on Lys-69, which acts as the Proton acceptor. 2 residues coordinate shikimate: Asn-90 and Asp-105. NADP(+)-binding positions include Gly-125–Ser-129 and Leu-208. Shikimate is bound at residue Tyr-210. Gly-230 serves as a coordination point for NADP(+).

This sequence belongs to the shikimate dehydrogenase family. Homodimer.

The catalysed reaction is shikimate + NADP(+) = 3-dehydroshikimate + NADPH + H(+). The protein operates within metabolic intermediate biosynthesis; chorismate biosynthesis; chorismate from D-erythrose 4-phosphate and phosphoenolpyruvate: step 4/7. Functionally, involved in the biosynthesis of the chorismate, which leads to the biosynthesis of aromatic amino acids. Catalyzes the reversible NADPH linked reduction of 3-dehydroshikimate (DHSA) to yield shikimate (SA). The chain is Shikimate dehydrogenase (NADP(+)) from Helicobacter acinonychis (strain Sheeba).